Consider the following 339-residue polypeptide: MRVYYDRDADMNLIKGKKVAIVGYGSQGRAHALNLKDSGVQNVQIALRSGSETVKKATADGFEVVSVAEAAKWADLIMMATPDELQADIYKEHIHDHLRDGAAVAFAHGLSIHFGLIEPKKTVDVVMIAPKGPGHTVRHEYQRGCGVPCLIAVAQDASGHAHSVALSYACGLGGGRAGVIETTFKEECETDLFGEQAVLCGGLVELIRAGYETLTQAGYAPEMAYFECLHEVKLIVDLMYEGGISNMNYSISNTAEWGEYMSGPRVITDETRAEMKRILKDIQTGKFTSNWIQEYKAGAAHFKSMRRLNDNHPIEEVGKKLRSMMPWIKSNALVDKERN.

Residues 1-182 (MRVYYDRDAD…GGGRAGVIET (182 aa)) form the KARI N-terminal Rossmann domain. Residues 24–27 (YGSQ), arginine 48, serine 51, threonine 53, and 83–86 (DELQ) contribute to the NADP(+) site. Residue histidine 108 is part of the active site. An NADP(+)-binding site is contributed by glycine 134. Positions 183-328 (TFKEECETDL…KKLRSMMPWI (146 aa)) constitute a KARI C-terminal knotted domain. Positions 191, 195, 227, and 231 each coordinate Mg(2+). Serine 252 provides a ligand contact to substrate.

This sequence belongs to the ketol-acid reductoisomerase family. Mg(2+) is required as a cofactor.

It catalyses the reaction (2R)-2,3-dihydroxy-3-methylbutanoate + NADP(+) = (2S)-2-acetolactate + NADPH + H(+). The enzyme catalyses (2R,3R)-2,3-dihydroxy-3-methylpentanoate + NADP(+) = (S)-2-ethyl-2-hydroxy-3-oxobutanoate + NADPH + H(+). It participates in amino-acid biosynthesis; L-isoleucine biosynthesis; L-isoleucine from 2-oxobutanoate: step 2/4. It functions in the pathway amino-acid biosynthesis; L-valine biosynthesis; L-valine from pyruvate: step 2/4. In terms of biological role, involved in the biosynthesis of branched-chain amino acids (BCAA). Catalyzes an alkyl-migration followed by a ketol-acid reduction of (S)-2-acetolactate (S2AL) to yield (R)-2,3-dihydroxy-isovalerate. In the isomerase reaction, S2AL is rearranged via a Mg-dependent methyl migration to produce 3-hydroxy-3-methyl-2-ketobutyrate (HMKB). In the reductase reaction, this 2-ketoacid undergoes a metal-dependent reduction by NADPH to yield (R)-2,3-dihydroxy-isovalerate. The chain is Ketol-acid reductoisomerase (NADP(+)) from Bartonella tribocorum (strain CIP 105476 / IBS 506).